A 245-amino-acid chain; its full sequence is Endonuclease III (245 aa).

One can recognise a HhH domain in the interval 119–138 (MDKLVTLPGVGRKTANVILG). [4Fe-4S] cluster is bound by residues cysteine 198, cysteine 205, cysteine 208, and cysteine 214.

The protein belongs to the Nth/MutY family. The cofactor is [4Fe-4S] cluster.

It catalyses the reaction 2'-deoxyribonucleotide-(2'-deoxyribose 5'-phosphate)-2'-deoxyribonucleotide-DNA = a 3'-end 2'-deoxyribonucleotide-(2,3-dehydro-2,3-deoxyribose 5'-phosphate)-DNA + a 5'-end 5'-phospho-2'-deoxyribonucleoside-DNA + H(+). DNA repair enzyme that has both DNA N-glycosylase activity and AP-lyase activity. The DNA N-glycosylase activity releases various damaged pyrimidines from DNA by cleaving the N-glycosidic bond, leaving an AP (apurinic/apyrimidinic) site. The AP-lyase activity cleaves the phosphodiester bond 3' to the AP site by a beta-elimination, leaving a 3'-terminal unsaturated sugar and a product with a terminal 5'-phosphate. Has a preference for oxidized pyrimidines, such as thymine glycol (prefers 5S isomers) 5,6-dihydrouracil:G, 5-hydroxyuracil:G, 5-hydroxycytosine:G and urea:A. Cleaves ssDNA containing an AP site. In Mycobacterium tuberculosis (strain ATCC 25618 / H37Rv), this protein is Endonuclease III.